The chain runs to 692 residues: Polyribonucleotide nucleotidyltransferase (692 aa).

Mg(2+) is bound by residues D484 and D490. The 64-residue stretch at 551–614 (PKYFIHKISQ…ALVERVKSIT (64 aa)) folds into the KH domain. The 69-residue stretch at 620 to 688 (GAVYTGKVKT…NRGRIRLSRK (69 aa)) folds into the S1 motif domain.

This sequence belongs to the polyribonucleotide nucleotidyltransferase family. Mg(2+) is required as a cofactor.

The protein resides in the cytoplasm. The enzyme catalyses RNA(n+1) + phosphate = RNA(n) + a ribonucleoside 5'-diphosphate. Its function is as follows. Involved in mRNA degradation. Catalyzes the phosphorolysis of single-stranded polyribonucleotides processively in the 3'- to 5'-direction. This is Polyribonucleotide nucleotidyltransferase from Desulfotalea psychrophila (strain LSv54 / DSM 12343).